The chain runs to 471 residues: Glutamate--tRNA ligase 1 (471 aa).

The 'HIGH' region motif lies at 10–20 (PSPTGYLHIGG). Positions 99, 101, 126, and 128 each coordinate Zn(2+). Residues 238 to 242 (RLSKR) carry the 'KMSKS' region motif. Lys-241 is a binding site for ATP.

It belongs to the class-I aminoacyl-tRNA synthetase family. Glutamate--tRNA ligase type 1 subfamily. As to quaternary structure, monomer. The cofactor is Zn(2+).

The protein resides in the cytoplasm. It carries out the reaction tRNA(Glu) + L-glutamate + ATP = L-glutamyl-tRNA(Glu) + AMP + diphosphate. Functionally, catalyzes the attachment of glutamate to tRNA(Glu) in a two-step reaction: glutamate is first activated by ATP to form Glu-AMP and then transferred to the acceptor end of tRNA(Glu). This chain is Glutamate--tRNA ligase 1, found in Alkalilimnicola ehrlichii (strain ATCC BAA-1101 / DSM 17681 / MLHE-1).